Consider the following 329-residue polypeptide: BTB/POZ domain-containing adapter for CUL3-mediated RhoA degradation protein 1 (329 aa).

Positions 1-15 are enriched in low complexity; that stretch reads MSAEASGPAAAEAPS. The interval 1-21 is disordered; that stretch reads MSAEASGPAAAEAPSLEVAKP. Residues 41–109 form the BTB domain; sequence KYVKLNVGGS…LRDGSVPLPE (69 aa). Positions 280-302 are disordered; sequence LEATGGAAGGGGASRGEDEDNRE.

This sequence belongs to the BACURD family. In terms of assembly, homotetramer; forms a two-fold symmetric tetramer in solution. Interacts with CUL3; interaction is direct and forms a 5:5 heterodecamer. Component of the BCR(KCTD13) E3 ubiquitin ligase complex, at least composed of CUL3, KCTD13/BACURD1 and RBX1. Interacts with RHOA; with a preference for RhoA-GDP. Interacts with POLD2 and PCNA. Interacts with SPRTN.

It is found in the nucleus. It functions in the pathway protein modification; protein ubiquitination. Substrate-specific adapter of a BCR (BTB-CUL3-RBX1) E3 ubiquitin-protein ligase complex required for synaptic transmission. The BCR(KCTD13) E3 ubiquitin ligase complex mediates the ubiquitination of RHOA, leading to its degradation by the proteasome, thereby regulating the actin cytoskeleton and promoting synaptic transmission. This Bos taurus (Bovine) protein is BTB/POZ domain-containing adapter for CUL3-mediated RhoA degradation protein 1 (KCTD13).